The following is a 906-amino-acid chain: Cadherin-2 (906 aa).

The N-terminal stretch at 1–25 is a signal peptide; the sequence is MCRIAGGPRTLLPLLAALLQASLEA. A propeptide spanning residues 26-159 is cleaved from the precursor; it reads SGELALCKTG…HSGALQRQKR (134 aa). Ser96 carries the post-translational modification Phosphoserine. 5 Cadherin domains span residues 160–267, 268–382, 383–497, 498–603, and 604–717; these read DWVI…RPEF, LHQV…PPEF, TAMT…NPYF, APNP…DNAP, and QVLP…RIVG. Residues 160–724 are Extracellular-facing; sequence DWVIPPINLP…IVGAGLGTGT (565 aa). Glu170 lines the Ca(2+) pocket. Residue Asn190 is glycosylated (N-linked (GlcNAc...) asparagine). Residues Asp226, Glu228, Asp259, Met260, Asn261, Asp262, and Asn263 each contribute to the Ca(2+) site. An N-linked (GlcNAc...) asparagine glycan is attached at Asn273. Residues Asp293, Asp295, and Asn301 each coordinate Ca(2+). Asn325 carries N-linked (GlcNAc...) asparagine glycosylation. A Ca(2+)-binding site is contributed by Asp353. 5 N-linked (GlcNAc...) asparagine glycosylation sites follow: Asn402, Asn572, Asn622, Asn651, and Asn692. A helical transmembrane segment spans residues 725–745; it reads IIAILLCIIILLILVLMFVVW. Over 746-906 the chain is Cytoplasmic; sequence MKRRDKERQA…LADMYGGGDD (161 aa). Residues 863–880 are compositionally biased toward low complexity; that stretch reads SGSTAGSLSSLNSSSSGG. The interval 863–883 is disordered; sequence SGSTAGSLSSLNSSSSGGDQD.

Homodimer (via extracellular region). Can also form heterodimers with other cadherins (via extracellular region). Dimerization occurs in trans, i.e. with a cadherin chain from another cell. Interacts with PCDH8; this complex may also include TAOK2. The interaction with PCDH8 may lead to internalization through TAOK2/p38 MAPK pathway. Identified in a complex containing FGFR4, NCAM1, CDH2, PLCG1, FRS2, SRC, SHC1, GAP43 and CTTN. May interact with OBSCN (via protein kinase domain 2). Interacts with FBXO45. In terms of processing, cleaved by MMP24. Ectodomain cleavage leads to the generation of a soluble 90 kDa N-terminal soluble fragment and a 45 kDa membrane-bound C-terminal fragment 1 (CTF1), which is further cleaved by gamma-secretase into a 35 kDa. Cleavage in neural stem cells by MMP24 affects CDH2-mediated anchorage of neural stem cells to ependymocytes in the adult subependymal zone, leading to modulate neural stem cell quiescence. Post-translationally, may be phosphorylated by OBSCN. In testis, expressed in Sertoli and germ cells.

It localises to the cell membrane. It is found in the sarcolemma. The protein resides in the cell junction. Its subcellular location is the cell surface. The protein localises to the desmosome. It localises to the adherens junction. Calcium-dependent cell adhesion protein; preferentially mediates homotypic cell-cell adhesion by dimerization with a CDH2 chain from another cell. Cadherins may thus contribute to the sorting of heterogeneous cell types. Acts as a regulator of neural stem cells quiescence by mediating anchorage of neural stem cells to ependymocytes in the adult subependymal zone: upon cleavage by MMP24, CDH2-mediated anchorage is affected, leading to modulate neural stem cell quiescence. Plays a role in cell-to-cell junction formation between pancreatic beta cells and neural crest stem (NCS) cells, promoting the formation of processes by NCS cells. Required for proper neurite branching. Required for pre- and postsynaptic organization. CDH2 may be involved in neuronal recognition mechanism. In hippocampal neurons, may regulate dendritic spine density. The polypeptide is Cadherin-2 (Cdh2) (Rattus norvegicus (Rat)).